Here is a 213-residue protein sequence, read N- to C-terminus: Cytokinin riboside 5'-monophosphate phosphoribohydrolase LOG2 (213 aa).

Substrate is bound by residues Glu-79, 97-98 (RK), 114-120 (GYGTFEE), and Thr-126.

It belongs to the LOG family. In terms of tissue distribution, expressed in roots and shoots. Detected in root hairs.

The protein localises to the cytoplasm. It is found in the nucleus. The catalysed reaction is N(6)-(dimethylallyl)adenosine 5'-phosphate + H2O = N(6)-dimethylallyladenine + D-ribose 5-phosphate. It catalyses the reaction 9-ribosyl-trans-zeatin 5'-phosphate + H2O = trans-zeatin + D-ribose 5-phosphate. Functionally, cytokinin-activating enzyme working in the direct activation pathway. Phosphoribohydrolase that converts inactive cytokinin nucleotides to the biologically active free-base forms. In Arabidopsis thaliana (Mouse-ear cress), this protein is Cytokinin riboside 5'-monophosphate phosphoribohydrolase LOG2 (LOG2).